The chain runs to 181 residues: Large ribosomal subunit protein uL16 (181 aa).

This sequence belongs to the universal ribosomal protein uL16 family.

This chain is Large ribosomal subunit protein uL16, found in Pyrococcus abyssi (strain GE5 / Orsay).